A 1433-amino-acid polypeptide reads, in one-letter code: DNA-directed RNA polymerase subunit beta' (1433 aa).

Cys-60, Cys-62, Cys-75, and Cys-78 together coordinate Zn(2+). Mg(2+)-binding residues include Asp-449, Asp-451, and Asp-453. The Zn(2+) site is built by Cys-777, Cys-851, Cys-858, and Cys-861. Composition is skewed to acidic residues over residues Asp-1383 to Glu-1393 and Glu-1411 to Asp-1433. Positions Asp-1383–Asp-1433 are disordered.

Belongs to the RNA polymerase beta' chain family. As to quaternary structure, the RNAP catalytic core consists of 2 alpha, 1 beta, 1 beta' and 1 omega subunit. When a sigma factor is associated with the core the holoenzyme is formed, which can initiate transcription. Mg(2+) serves as cofactor. It depends on Zn(2+) as a cofactor.

The catalysed reaction is RNA(n) + a ribonucleoside 5'-triphosphate = RNA(n+1) + diphosphate. In terms of biological role, DNA-dependent RNA polymerase catalyzes the transcription of DNA into RNA using the four ribonucleoside triphosphates as substrates. The chain is DNA-directed RNA polymerase subunit beta' from Leptospira biflexa serovar Patoc (strain Patoc 1 / Ames).